A 370-amino-acid polypeptide reads, in one-letter code: Sensor histidine kinase DesK (370 aa).

Residues 1 to 10 (MIKNHFTFQK) lie on the Extracellular side of the membrane. The chain crosses the membrane as a helical span at residues 11-31 (LNGITPYIWTIFFILPFYFIW). The Cytoplasmic segment spans residues 32–36 (KSSST). A helical transmembrane segment spans residues 37–57 (FVIIVGIILTLLFFSVYRFAF). Topologically, residues 58 to 70 (VSKGWTIYLWGFL) are extracellular. A helical membrane pass occupies residues 71-91 (LIGISTASITLFSYIYFAFFI). At 92–103 (AYFIGNIKERVP) the chain is on the cytoplasmic side. Residues 104–124 (FHILYYVHLISAAVAANFSLV) traverse the membrane as a helical segment. The Extracellular portion of the chain corresponds to 125–128 (LKKE). A helical membrane pass occupies residues 129–149 (FFLTQIPFVVITLISAILLPF). Over 150–370 (SIKSRKERER…LTMAIPNNSK (221 aa)) the chain is Cytoplasmic. Residues 186-369 (DLHDTLGQKL…KLTMAIPNNS (184 aa)) enclose the Histidine kinase domain. The residue at position 188 (His188) is a Phosphohistidine; by autocatalysis.

It localises to the cell membrane. It catalyses the reaction ATP + protein L-histidine = ADP + protein N-phospho-L-histidine.. Member of the two-component regulatory system DesR/DesK, responsible for cold induction of the des gene coding for the Delta5 acyl-lipid desaturase. Acts as a sensor of the membrane fluidity. Probably activates DesR by phosphorylation. The chain is Sensor histidine kinase DesK (desK) from Bacillus subtilis (strain 168).